The chain runs to 333 residues: Homoserine O-succinyltransferase (333 aa).

The active-site Acyl-thioester intermediate is the Cys-147. Residues Lys-168 and Ser-196 each contribute to the substrate site. His-239 (proton acceptor) is an active-site residue. Glu-241 is a catalytic residue. Arg-253 is a binding site for substrate.

This sequence belongs to the MetA family.

The protein resides in the cytoplasm. It carries out the reaction L-homoserine + succinyl-CoA = O-succinyl-L-homoserine + CoA. Its pathway is amino-acid biosynthesis; L-methionine biosynthesis via de novo pathway; O-succinyl-L-homoserine from L-homoserine: step 1/1. Transfers a succinyl group from succinyl-CoA to L-homoserine, forming succinyl-L-homoserine. In Rhodopseudomonas palustris, this protein is Homoserine O-succinyltransferase.